We begin with the raw amino-acid sequence, 405 residues long: L-carnitine CoA-transferase (405 aa).

Lys97 and Arg104 together coordinate CoA. Asp169 serves as the catalytic Nucleophile.

The protein belongs to the CoA-transferase III family. CaiB subfamily. As to quaternary structure, homodimer.

The protein resides in the cytoplasm. It catalyses the reaction crotonobetainyl-CoA + (R)-carnitine = crotonobetaine + (R)-carnitinyl-CoA. It carries out the reaction 4-(trimethylamino)butanoyl-CoA + (R)-carnitine = (R)-carnitinyl-CoA + 4-(trimethylamino)butanoate. It participates in amine and polyamine metabolism; carnitine metabolism. Functionally, catalyzes the reversible transfer of the CoA moiety from gamma-butyrobetainyl-CoA to L-carnitine to generate L-carnitinyl-CoA and gamma-butyrobetaine. Is also able to catalyze the reversible transfer of the CoA moiety from gamma-butyrobetainyl-CoA or L-carnitinyl-CoA to crotonobetaine to generate crotonobetainyl-CoA. This chain is L-carnitine CoA-transferase, found in Escherichia coli (strain 55989 / EAEC).